Consider the following 124-residue polypeptide: Putative membrane protein insertion efficiency factor (124 aa).

Belongs to the UPF0161 family.

The protein localises to the cell inner membrane. Could be involved in insertion of integral membrane proteins into the membrane. The chain is Putative membrane protein insertion efficiency factor from Psychrobacter cryohalolentis (strain ATCC BAA-1226 / DSM 17306 / VKM B-2378 / K5).